A 647-amino-acid chain; its full sequence is Transcriptional repressor XBP1 (647 aa).

Polar residues-rich tracts occupy residues 138 to 148 and 156 to 170; these read SNKTPVSASPT and STASRENATSSLTKN. 2 disordered regions span residues 138–170 and 264–295; these read SNKTPVSASPTKQEKKALSTASRENATSSLTKN and LLSSSTSSPPKRRTSTGSTFLDANASSSSTSS. Positions 264-282 are enriched in low complexity; it reads LLSSSTSSPPKRRTSTGST. Residues 282 to 395 enclose the HTH APSES-type domain; the sequence is TFLDANASSS…PDFPKDCESW (114 aa). The segment at residues 318 to 339 is a DNA-binding region (H-T-H motif); the sequence is CQSYKDFLINELGPDQIDLPNL. Positions 425 to 434 are enriched in low complexity; that stretch reads TNFTSTAVAR. 3 disordered regions span residues 425-455, 485-508, and 612-647; these read TNFTSTAVARPRQKPRPRPRQRSTSMSHSKA, KKNSKRQKSSTYTSQTSSPIGPRD, and QNQRPAHNTNTNMDTSFSPRANNSLNNFKFKTNSKQ. Over residues 435–445 the composition is skewed to basic residues; sequence PRQKPRPRPRQ. A compositionally biased stretch (low complexity) spans 493-502; sequence SSTYTSQTSS.

It is found in the nucleus. Transcriptional repressor which binds to the consensus sequence 5'-GCCTCGA[G/A]G[C/A]-3'. Represses CLN1 transcription. The chain is Transcriptional repressor XBP1 (XBP1) from Saccharomyces cerevisiae (strain ATCC 204508 / S288c) (Baker's yeast).